Consider the following 956-residue polypeptide: Replication factor C subunit 1 (956 aa).

Composition is skewed to basic and acidic residues over residues 1–15 (MSDI…HEKG) and 50–74 (TADR…KEVE). Disordered regions lie at residues 1–206 (MSDI…TPDC) and 286–332 (KKSL…AKGK). Residues 158–183 (RGRGGRAAPGASTGGRGRGGGRGGFM) are compositionally biased toward gly residues. 2 stretches are compositionally biased toward basic and acidic residues: residues 186-200 (GERK…KEVP) and 288-298 (SLPERSNKGTE). The 91-residue stretch at 202–292 (GTPDCLAGLT…KPVKKSLPER (91 aa)) folds into the BRCT domain. ATP is bound at residue 399–406 (SGTPGIGK). Residues 858-956 (LEPTVDSLRD…GRGSGAKRKR (99 aa)) are disordered. Residues 866–892 (RDEDGEPLADNEEGNGSDAEEDSEEAT) show a composition bias toward acidic residues. Positions 916–925 (KGAGSSGSRK) are enriched in low complexity.

This sequence belongs to the activator 1 large subunit family. Heterotetramer of subunits RFC2, RFC3, RFC4 and RFC5 that can form a complex with RFC1. In terms of tissue distribution, expressed at high levels in flowers and siliques, and at lower levels in roots, stems and leaves.

It localises to the nucleus. Its function is as follows. Plays a role as mediator of transcriptional gene silencing (TGS), DNA replication, DNA repair, hypersensitive response (HR) and telomere length regulation. Is required in meiosis for DNA double-strand break (DSB) repair during meiotic homologous recombination. May participate in the RAD51-mediated recombination intermediate repair process. Is important for lagging strand synthesis. Promotes meiotic recombination via a specific pathway for crossovers (COs) that involves the formation of double Holliday Junction (dHJ) intermediates. This Arabidopsis thaliana (Mouse-ear cress) protein is Replication factor C subunit 1 (RFC1).